A 309-amino-acid polypeptide reads, in one-letter code: HPr kinase/phosphorylase (309 aa).

Residues His-138 and Lys-159 contribute to the active site. 153 to 160 (GQSGVGKS) provides a ligand contact to ATP. Ser-160 contributes to the Mg(2+) binding site. The active-site Proton acceptor; for phosphorylation activity. Proton donor; for dephosphorylation activity is the Asp-177. The interval 201-210 (LEIRGLGIIN) is important for the catalytic mechanism of both phosphorylation and dephosphorylation. Residue Glu-202 coordinates Mg(2+). Residue Arg-243 is part of the active site. Positions 264–269 (PVRPGR) are important for the catalytic mechanism of dephosphorylation.

The protein belongs to the HPrK/P family. As to quaternary structure, homohexamer. Mg(2+) serves as cofactor.

It catalyses the reaction [HPr protein]-L-serine + ATP = [HPr protein]-O-phospho-L-serine + ADP + H(+). It carries out the reaction [HPr protein]-O-phospho-L-serine + phosphate + H(+) = [HPr protein]-L-serine + diphosphate. Its function is as follows. Catalyzes the ATP- as well as the pyrophosphate-dependent phosphorylation of a specific serine residue in HPr, a phosphocarrier protein of the phosphoenolpyruvate-dependent sugar phosphotransferase system (PTS). HprK/P also catalyzes the pyrophosphate-producing, inorganic phosphate-dependent dephosphorylation (phosphorolysis) of seryl-phosphorylated HPr (P-Ser-HPr). The two antagonistic activities of HprK/P are regulated by several intracellular metabolites, which change their concentration in response to the absence or presence of rapidly metabolisable carbon sources (glucose, fructose, etc.) in the growth medium. Also phosphorylates/dephosphorylates the HPr-like catabolite repression protein crh on a specific serine residue. Therefore, by controlling the phosphorylation state of HPr and crh, HPrK/P is a sensor enzyme that plays a major role in the regulation of carbon metabolism and sugar transport: it mediates carbon catabolite repression (CCR), and regulates PTS-catalyzed carbohydrate uptake and inducer exclusion. This Bacillus cereus (strain AH820) protein is HPr kinase/phosphorylase.